The primary structure comprises 241 residues: Synaptogyrin (241 aa).

The 150-residue stretch at 30 to 179 folds into the MARVEL domain; it reads FAMKPQVVIR…CALMAYKRFL (150 aa). 4 helical membrane passes run 34–54, 81–101, 115–135, and 155–175; these read PQVV…GCIS, MVGV…FLFE, ADMG…LYLW, and TAIW…LMAY. Positions 216–241 are disordered; it reads ASPFGQPQQGGMEQQQSGMEYQQPTY. The span at 220 to 241 shows a compositional bias: low complexity; the sequence is GQPQQGGMEQQQSGMEYQQPTY.

The protein belongs to the synaptogyrin family.

The protein resides in the cytoplasmic vesicle membrane. It is found in the cytoplasmic vesicle. Its subcellular location is the secretory vesicle membrane. The protein localises to the secretory vesicle. It localises to the synaptic vesicle membrane. Required for the correct formation of synaptic vesicles at nerve terminals and has a role in the regulation of the synaptic vesicle exo-endocytic cycle. In Drosophila melanogaster (Fruit fly), this protein is Synaptogyrin.